Reading from the N-terminus, the 30-residue chain is Conotoxin Bt12.1 (30 aa).

In terms of processing, contains 3 disulfide bonds. Expressed by the venom duct.

It localises to the secreted. In Conus betulinus (Beech cone), this protein is Conotoxin Bt12.1.